Reading from the N-terminus, the 159-residue chain is uncharacterized protein (159 aa).

This is an uncharacterized protein from Homo sapiens (Human).